The chain runs to 1030 residues: MMS19 nucleotide excision repair protein homolog (1030 aa).

Alanine 2 carries the post-translational modification N-acetylalanine. Lysine 496 is modified (N6-acetyllysine). 4 HEAT repeats span residues 866-904 (QRFF…RLPK), 908-946 (LPEL…EAPQ), 949-987 (SLHV…LPTP), and 990-1028 (LPYK…LGSP). Serine 1027 carries the phosphoserine modification.

Belongs to the MET18/MMS19 family. In terms of assembly, component of the CIA complex. In the CIA complex, interacts directly with CIAO2B and CIAO3. Component of the MMXD complex, composed of CIAO1, ERCC2, CIAO2B, MMS19 and SLC25A5. Interacts with CIAO2B; the interaction is direct. Interacts with ERCC2/XPD; the interaction is direct. Interacts with ERCC3/XPB and NCOA3/RAC3. Interacts with RTEL1; the interaction mediates the association of RTEL1 with the CIA complex. Interacts with BRIP1. Interacts with KIF4A; the interaction facilitates the transfer of Fe-S clusters to KIF4A to ensure proper localization of KIF4A to the mitotic machinery components. Interacts with CCDC117; the interaction is indirect. Ubiquitinated; undergoes 'Lys-48'-linked polyubiquitination by MAGEF1-NSMCE1 ubiquitin ligase complex leading to proteasomal degradation. As to expression, ubiquitously expressed with higher expression in testis.

Its subcellular location is the nucleus. The protein resides in the cytoplasm. The protein localises to the cytoskeleton. It is found in the spindle. It localises to the microtubule organizing center. Its subcellular location is the centrosome. Key component of the cytosolic iron-sulfur protein assembly (CIA) complex, a multiprotein complex that mediates the incorporation of iron-sulfur cluster into apoproteins specifically involved in DNA metabolism and genomic integrity. In the CIA complex, MMS19 acts as an adapter between early-acting CIA components and a subset of cellular target iron-sulfur proteins such as ERCC2/XPD, FANCJ and RTEL1, thereby playing a key role in nucleotide excision repair (NER), homologous recombination-mediated double-strand break DNA repair, DNA replication and RNA polymerase II (POL II) transcription. As part of the mitotic spindle-associated MMXD complex, plays a role in chromosome segregation, probably by facilitating iron-sulfur (Fe-S) cluster assembly into ERCC2/XPD. Together with CIAO2, facilitates the transfer of Fe-S clusters to the motor protein KIF4A, which ensures proper localization of KIF4A to mitotic machinery components to promote the progression of mitosis. Indirectly acts as a transcriptional coactivator of estrogen receptor (ER), via its role in iron-sulfur insertion into some component of the TFIIH-machinery. This Homo sapiens (Human) protein is MMS19 nucleotide excision repair protein homolog.